The sequence spans 492 residues: Ketol-acid reductoisomerase (NADP(+)) (492 aa).

The KARI N-terminal Rossmann domain maps to 15-208 (AQLGKCRFMA…GGHRAGVLES (194 aa)). Residues 45–48 (CGAQ), Arg-68, Arg-76, Ser-78, and 108–110 (DKQ) each bind NADP(+). His-132 is an active-site residue. Position 158 (Gly-158) interacts with NADP(+). KARI C-terminal knotted domains follow at residues 209-344 (SFVA…NAPQ) and 345-485 (FEGK…MTDM). Residues Asp-217, Glu-221, Glu-389, and Glu-393 each contribute to the Mg(2+) site. Residue Ser-414 participates in substrate binding.

This sequence belongs to the ketol-acid reductoisomerase family. Mg(2+) is required as a cofactor.

The catalysed reaction is (2R)-2,3-dihydroxy-3-methylbutanoate + NADP(+) = (2S)-2-acetolactate + NADPH + H(+). It catalyses the reaction (2R,3R)-2,3-dihydroxy-3-methylpentanoate + NADP(+) = (S)-2-ethyl-2-hydroxy-3-oxobutanoate + NADPH + H(+). It functions in the pathway amino-acid biosynthesis; L-isoleucine biosynthesis; L-isoleucine from 2-oxobutanoate: step 2/4. The protein operates within amino-acid biosynthesis; L-valine biosynthesis; L-valine from pyruvate: step 2/4. Its function is as follows. Involved in the biosynthesis of branched-chain amino acids (BCAA). Catalyzes an alkyl-migration followed by a ketol-acid reduction of (S)-2-acetolactate (S2AL) to yield (R)-2,3-dihydroxy-isovalerate. In the isomerase reaction, S2AL is rearranged via a Mg-dependent methyl migration to produce 3-hydroxy-3-methyl-2-ketobutyrate (HMKB). In the reductase reaction, this 2-ketoacid undergoes a metal-dependent reduction by NADPH to yield (R)-2,3-dihydroxy-isovalerate. This chain is Ketol-acid reductoisomerase (NADP(+)), found in Yersinia enterocolitica serotype O:8 / biotype 1B (strain NCTC 13174 / 8081).